The following is a 54-amino-acid chain: MLHYSVVFLVIALIAAIFGFGGIAAGAVEIAKILFFIFAIMAVVSFVMGLIKKN.

2 helical membrane passes run 6-26 (VVFLVIALIAAIFGFGGIAAG) and 30-50 (IAKILFFIFAIMAVVSFVMGL).

The protein belongs to the UPF0391 family.

It localises to the cell membrane. This is UPF0391 membrane protein Bpro_0879 from Polaromonas sp. (strain JS666 / ATCC BAA-500).